Reading from the N-terminus, the 907-residue chain is Potassium channel AKT3 (907 aa).

At 1-75 the chain is on the cytoplasmic side; the sequence is MPTTKCAVPL…YDRRYELWNN (75 aa). Residues 76–96 form a helical membrane-spanning segment; the sequence is YLILLVVYSAWVTPFEFGFVP. Over 97 to 102 the chain is Extracellular; sequence EPAGAL. Residues 103-123 form a helical membrane-spanning segment; that stretch reads AAADNAVNAFFAVDIVLTFFV. The Cytoplasmic portion of the chain corresponds to 124–146; it reads AYTDPKTFLLQDDPRKIALRYIT. Residues 147-167 traverse the membrane as a helical segment; sequence TWFVLDVVATIPTELARRILP. Residues 168 to 174 are Extracellular-facing; that stretch reads PDLRSYG. The chain crosses the membrane as a helical; Voltage-sensor span at residues 175 to 195; it reads FFGILRLWRLHRVGILFARLE. The Cytoplasmic segment spans residues 196–209; the sequence is KDRKFSYFWVRCVK. Residues 210 to 230 traverse the membrane as a helical segment; sequence LVCVTLFAVHCSACFYYLLAD. Topologically, residues 231-257 are extracellular; that stretch reads RYPDPTNTWISAYMPNFHKASIWSRYV. The pore-forming intramembrane region spans 258 to 277; it reads ASMYWSITTLSTVGYGDMHA. Topologically, residues 278–288 are extracellular; that stretch reads ENTGEMVFTTT. The chain crosses the membrane as a helical span at residues 289 to 309; that stretch reads YMLFNLGLTAYIIGNMTNLVV. Residues 310–907 lie on the Cytoplasmic side of the membrane; that stretch reads HGTSRTRKFR…VPPENRSRNQ (598 aa). An a nucleoside 3',5'-cyclic phosphate-binding site is contributed by 388–512; the sequence is LFEGVSNDLI…TIVMNNLIQY (125 aa). ANK repeat units lie at residues 539-568, 572-601, 605-634, 636-665, and 670-699; these read DFPI…DPNE, YGRT…DSNS, EGRV…DLSG, DAAP…DVSG, and DGTT…DADA. Disordered regions lie at residues 726-779 and 801-824; these read ATRH…TPQR and GGYR…SSPP. Residues 754 to 776 are compositionally biased toward low complexity; the sequence is SSPSSSSRRGRTSSTSAASARST. Over residues 803-812 the composition is skewed to gly residues; it reads YRGGGGGGGA. The KHA domain occupies 827–907; the sequence is RVAISCPESR…VPPENRSRNQ (81 aa).

It belongs to the potassium channel family. Plant (TC 1.A.1.4) subfamily.

It localises to the membrane. Functionally, probable inward-rectifying potassium channel. Assuming opened or closed conformations in response to the voltage difference across the membrane, the channel is activated by hyperpolarization. In Oryza sativa subsp. japonica (Rice), this protein is Potassium channel AKT3.